A 314-amino-acid polypeptide reads, in one-letter code: Malate dehydrogenase (314 aa).

NAD(+) contacts are provided by residues 12-17 and aspartate 36; that span reads GAGNIG. Residues arginine 85 and arginine 91 each contribute to the substrate site. NAD(+) is bound by residues asparagine 98 and 121 to 123; that span reads VTN. The substrate site is built by asparagine 123 and arginine 154. Histidine 178 acts as the Proton acceptor in catalysis.

This sequence belongs to the LDH/MDH superfamily. MDH type 3 family.

The enzyme catalyses (S)-malate + NAD(+) = oxaloacetate + NADH + H(+). Its function is as follows. Catalyzes the reversible oxidation of malate to oxaloacetate. The polypeptide is Malate dehydrogenase (Wolbachia pipientis subsp. Culex pipiens (strain wPip)).